Reading from the N-terminus, the 180-residue chain is Secreted RxLR effector protein 5 (180 aa).

An N-terminal signal peptide occupies residues M1 to A24. The RxLR-dEER signature appears at R44–R60.

This sequence belongs to the RxLR effector family.

The protein resides in the secreted. The protein localises to the host cell. Its function is as follows. Secreted effector that partially suppresses elicitor-induced cell death in host and enhances virulence of P.parasitica. The protein is Secreted RxLR effector protein 5 of Phytophthora nicotianae (Potato buckeye rot agent).